A 708-amino-acid chain; its full sequence is GID complex associated protein 12 (708 aa).

A compositionally biased stretch (low complexity) spans Ser381–Arg396. The segment at Ser381–Arg403 is disordered.

In terms of assembly, interacts with core components of the GID/CTLH ubiquitin ligase complex. GID12 binds both the substrate receptor GID4 and the tip of GID5 in the scaffolding module, sealing GID4 onto the scaffold.

Functionally, regulator of the GID E3 ligase complex. Modulates both assembly of the substrate receptor GID4 into the GID E3 ligase complex and its activity toward its substrates. GID12-binding remodels the N-degron binding pocket in the GID(SR4) complex, and could limit substrate accessibility of a bulky substrate to a ubiquitynation active site, thereby stabilizing gluconeogenic enzyme substrates. Involved in actin patch formation. This is GID complex associated protein 12 from Saccharomyces cerevisiae (strain ATCC 204508 / S288c) (Baker's yeast).